Reading from the N-terminus, the 119-residue chain is C-C motif chemokine 24 (119 aa).

An N-terminal signal peptide occupies residues 1–26 (MAGLMTIVTSLLFLGVCAHHIIPTGS). 2 cysteine pairs are disulfide-bonded: Cys-33–Cys-58 and Cys-34–Cys-74. Residue Asn-115 is glycosylated (N-linked (GlcNAc...) asparagine).

It belongs to the intercrine beta (chemokine CC) family. Post-translationally, N-glycosylated. In terms of tissue distribution, activated monocytes and activated T lymphocytes.

It localises to the secreted. Chemotactic for resting T-lymphocytes, and eosinophils. Has lower chemotactic activity for neutrophils but none for monocytes and activated lymphocytes. Is a strong suppressor of colony formation by a multipotential hematopoietic progenitor cell line. Binds to CCR3. This Homo sapiens (Human) protein is C-C motif chemokine 24.